The following is a 317-amino-acid chain: Ribosomal RNA small subunit methyltransferase H (317 aa).

S-adenosyl-L-methionine contacts are provided by residues 36 to 38 (GGH), Asp-56, Phe-80, Asp-102, and Gln-109.

This sequence belongs to the methyltransferase superfamily. RsmH family.

It localises to the cytoplasm. It catalyses the reaction cytidine(1402) in 16S rRNA + S-adenosyl-L-methionine = N(4)-methylcytidine(1402) in 16S rRNA + S-adenosyl-L-homocysteine + H(+). Specifically methylates the N4 position of cytidine in position 1402 (C1402) of 16S rRNA. In Baumannia cicadellinicola subsp. Homalodisca coagulata, this protein is Ribosomal RNA small subunit methyltransferase H.